The sequence spans 397 residues: MNCEREQLRGNQEAAAAPDTMAQPYASAQFAPPQNGIPAEYTAPHPHPAPEYTGQTTVPEHTLNLYPPAQTHSEQSPADTSAQTVSGTATQTDDAAPTDGQPQTQPSENTENKSQPKRLHVSNIPFRFRDPDLRQMFGQFGKILDVEIIFNERGSKGFGFVTFENSADADRAREKLHGTVVEGRKIEVNNATARVMTNKKTVNPYTNGWKLNPVVGAVYSPEFYAGTVLLCQANQEGSSMYSAPSSLVYTSAMPGFPYPAATAAAAYRGAHLRGRGRTVYNTFRAAAPPPPIPAYGGVVYQDGFYGADIYGGYAAYRYAQPTPATAAAYSDSYGRVYAADPYHHALAPAPTYGVGAMNAFAPLTDAKTRSHADDVGLVLSSLQASIYRGGYNRFAPY.

Residues 1 to 121 are disordered; that stretch reads MNCEREQLRG…NKSQPKRLHV (121 aa). The segment covering 70–87 has biased composition (polar residues); sequence QTHSEQSPADTSAQTVSG. Positions 88–99 are enriched in low complexity; it reads TATQTDDAAPTD. Positions 100–113 are enriched in polar residues; it reads GQPQTQPSENTENK. Residues 117-193 enclose the RRM domain; it reads KRLHVSNIPF…RKIEVNNATA (77 aa). Position 317 is an asymmetric dimethylarginine (Arg317). Arg388 is modified (omega-N-methylarginine).

In terms of assembly, binds to the C-terminus of ATXN2. In terms of tissue distribution, predominantly expressed in muscle and brain.

It is found in the nucleus. Its subcellular location is the cytoplasm. Its function is as follows. RNA-binding protein that regulates alternative splicing events by binding to 5'-UGCAUGU-3' elements. Regulates alternative splicing of tissue-specific exons and of differentially spliced exons during erythropoiesis. The protein is RNA binding protein fox-1 homolog 1 (RBFOX1) of Homo sapiens (Human).